The sequence spans 337 residues: Anthranilate phosphoribosyltransferase (337 aa).

5-phospho-alpha-D-ribose 1-diphosphate-binding positions include glycine 80, 83–84 (GD), threonine 88, 90–93 (NIST), 108–116 (KHGNRAVSS), and serine 120. Glycine 80 contacts anthranilate. Residue serine 92 coordinates Mg(2+). Asparagine 111 lines the anthranilate pocket. Position 166 (arginine 166) interacts with anthranilate. Mg(2+) contacts are provided by aspartate 224 and glutamate 225.

It belongs to the anthranilate phosphoribosyltransferase family. In terms of assembly, homodimer. Mg(2+) serves as cofactor.

It catalyses the reaction N-(5-phospho-beta-D-ribosyl)anthranilate + diphosphate = 5-phospho-alpha-D-ribose 1-diphosphate + anthranilate. It functions in the pathway amino-acid biosynthesis; L-tryptophan biosynthesis; L-tryptophan from chorismate: step 2/5. Functionally, catalyzes the transfer of the phosphoribosyl group of 5-phosphorylribose-1-pyrophosphate (PRPP) to anthranilate to yield N-(5'-phosphoribosyl)-anthranilate (PRA). The chain is Anthranilate phosphoribosyltransferase from Anaeromyxobacter sp. (strain Fw109-5).